The following is a 471-amino-acid chain: Putative multidrug resistance protein MdtD (471 aa).

At methionine 1–glutamine 11 the chain is on the periplasmic side. Residues leucine 12–alanine 32 traverse the membrane as a helical segment. The Cytoplasmic segment spans residues leucine 33–histidine 48. Residues methionine 49–alanine 69 traverse the membrane as a helical segment. The Periplasmic segment spans residues aspartate 70–asparagine 76. A helical membrane pass occupies residues isoleucine 77–threonine 97. Residues leucine 98 to leucine 101 lie on the Cytoplasmic side of the membrane. The helical transmembrane segment at leucine 102–methionine 124 threads the bilayer. Topologically, residues lysine 125–threonine 137 are periplasmic. Residues phenylalanine 138–valine 158 form a helical membrane-spanning segment. Residues glutamate 159–histidine 164 lie on the Cytoplasmic side of the membrane. Residues tryptophan 165 to methionine 185 traverse the membrane as a helical segment. At proline 186–aspartate 196 the chain is on the periplasmic side. A helical membrane pass occupies residues leucine 197–serine 217. At lysine 218–proline 224 the chain is on the cytoplasmic side. A helical membrane pass occupies residues leucine 225 to alanine 245. The Periplasmic segment spans residues arginine 246–threonine 262. A helical transmembrane segment spans residues phenylalanine 263–methionine 283. Topologically, residues threonine 284 to proline 285 are cytoplasmic. Residues valine 286–methionine 306 form a helical membrane-spanning segment. Residues valine 307–threonine 341 are Periplasmic-facing. The helical transmembrane segment at leucine 342–leucine 362 threads the bilayer. Residues glutamine 363–serine 395 lie on the Cytoplasmic side of the membrane. The helical transmembrane segment at methionine 396–phenylalanine 416 threads the bilayer. Residues glycine 417–threonine 430 are Periplasmic-facing. Residues valine 431 to alanine 451 traverse the membrane as a helical segment. At arginine 452 to glutamine 471 the chain is on the cytoplasmic side.

This sequence belongs to the major facilitator superfamily. TCR/Tet family.

The protein resides in the cell inner membrane. The sequence is that of Putative multidrug resistance protein MdtD from Escherichia fergusonii (strain ATCC 35469 / DSM 13698 / CCUG 18766 / IAM 14443 / JCM 21226 / LMG 7866 / NBRC 102419 / NCTC 12128 / CDC 0568-73).